The following is a 299-amino-acid chain: Palmitoyltransferase ZDHHC3 (299 aa).

At 1–47 (MMLIPTHHFRNIERKPEYLQPEKCVPPPYPGPVGTMWFIRDGCGIAC) the chain is on the cytoplasmic side. Residue tyrosine 18 is modified to Phosphotyrosine. Residues 48-68 (AIVTWFLVLYAEFVVLFVMLI) form a helical membrane-spanning segment. Residues 69-72 (PSRD) lie on the Extracellular side of the membrane. Residues 73-93 (YVYSIINGIVFNLLAFLALAS) traverse the membrane as a helical segment. The Cytoplasmic segment spans residues 94-171 (HCRAMLTDPG…NCVGENNQKY (78 aa)). One can recognise a DHHC domain in the interval 127–177 (YKCPKCCSIKPDRAHHCSVCKRCIRKMDHHCPWVNNCVGENNQKYFVLFTM). Residue cysteine 146 is the site of S-palmitoyl cysteine attachment. The S-palmitoyl cysteine intermediate role is filled by cysteine 157. The chain crosses the membrane as a helical span at residues 172–192 (FVLFTMYIALISLHALIMVGF). Residues 193–214 (HFLHCFEEDWTKCSSFSPPTTV) are Extracellular-facing. Residues 215–235 (ILLILLCFEGLLFLIFTSVMF) form a helical membrane-spanning segment. Residues 236 to 299 (GTQVHSICTD…GKADPYQYVV (64 aa)) are Cytoplasmic-facing.

This sequence belongs to the DHHC palmitoyltransferase family. As to quaternary structure, monomer. Homooligomers. The monomeric form has a higher catalytic activity. Forms heterooligomers with ZDHHC7. Interacts with TNFRSF10A. In terms of processing, autopalmitoylated. Phosphorylation by FGFR1 and SRC probably regulates the palmitoyltransferase activity. In terms of tissue distribution, widely expressed with significant expression in heart, lung, liver, skeletal muscle, kidney, testis, thymus, small intestine and leukocyte.

The protein localises to the golgi apparatus membrane. The catalysed reaction is L-cysteinyl-[protein] + hexadecanoyl-CoA = S-hexadecanoyl-L-cysteinyl-[protein] + CoA. It catalyses the reaction L-cysteinyl-[protein] + tetradecanoyl-CoA = S-tetradecanoyl-L-cysteinyl-[protein] + CoA. The enzyme catalyses L-cysteinyl-[protein] + octadecanoyl-CoA = S-octadecanoyl-L-cysteinyl-[protein] + CoA. Functionally, golgi-localized palmitoyltransferase that catalyzes the addition of palmitate onto various protein substrates. Has no stringent fatty acid selectivity and in addition to palmitate can also transfer onto target proteins myristate from tetradecanoyl-CoA and stearate from octadecanoyl-CoA. Plays an important role in G protein-coupled receptor signaling pathways involving GNAQ and potentially other heterotrimeric G proteins by regulating their dynamic association with the plasma membrane. Palmitoylates ITGA6 and ITGB4, thereby regulating the alpha-6/beta-4 integrin localization, expression and function in cell adhesion to laminin. Plays a role in the TRAIL-activated apoptotic signaling pathway most probably through the palmitoylation and localization to the plasma membrane of TNFRSF10A. In the brain, by palmitoylating the gamma subunit GABRG2 of GABA(A) receptors and regulating their postsynaptic accumulation, plays a role in synaptic GABAergic inhibitory function and GABAergic innervation. Palmitoylates the neuronal protein GAP43 which is also involved in the formation of GABAergic synapses. Palmitoylates NCDN thereby regulating its association with endosome membranes. Probably palmitoylates PRCD and is involved in its proper localization within the photoreceptor. Could mediate the palmitoylation of NCAM1 and regulate neurite outgrowth. Could palmitoylate DNAJC5 and regulate its localization to Golgi membranes. Also constitutively palmitoylates DLG4. May also palmitoylate SNAP25. Could palmitoylate the glutamate receptors GRIA1 and GRIA2 but this has not been confirmed in vivo. Could also palmitoylate the D(2) dopamine receptor DRD2. May also palmitoylate LAMTOR1, promoting its localization to lysosomal membranes. Palmitoylates the Toll-like receptor 9/TLR9 in the Golgi and thereby regulates TLR9 trafficking to endosomes. May palmitoylate CALHM1 and CALHM3 subunits of gustatory voltage-gated ion channels and modulate channel gating and kinetics. May also function as a calcium transporter. This chain is Palmitoyltransferase ZDHHC3, found in Homo sapiens (Human).